The primary structure comprises 428 residues: Histidinol dehydrogenase (428 aa).

Residues serine 234, glutamine 256, and histidine 259 each contribute to the substrate site. Glutamine 256 and histidine 259 together coordinate Zn(2+). Residues glutamate 323 and histidine 324 each act as proton acceptor in the active site. Residues histidine 324, aspartate 357, glutamate 411, and histidine 416 each coordinate substrate. Aspartate 357 lines the Zn(2+) pocket. Histidine 416 lines the Zn(2+) pocket.

The protein belongs to the histidinol dehydrogenase family. Zn(2+) serves as cofactor.

The enzyme catalyses L-histidinol + 2 NAD(+) + H2O = L-histidine + 2 NADH + 3 H(+). The protein operates within amino-acid biosynthesis; L-histidine biosynthesis; L-histidine from 5-phospho-alpha-D-ribose 1-diphosphate: step 9/9. Its function is as follows. Catalyzes the sequential NAD-dependent oxidations of L-histidinol to L-histidinaldehyde and then to L-histidine. This is Histidinol dehydrogenase from Campylobacter jejuni subsp. jejuni serotype O:2 (strain ATCC 700819 / NCTC 11168).